Consider the following 84-residue polypeptide: Sec-independent protein translocase protein TatA (84 aa).

The helical transmembrane segment at 1–21 threads the bilayer; it reads MGGISIWQLLIVAVIVVLLFG. Basic and acidic residues-rich tracts occupy residues 42 to 55 and 64 to 84; these read AMSDDDAKQDKTSQ and IADKQGEAKKEDAKSQDKEQV. The tract at residues 42–84 is disordered; the sequence is AMSDDDAKQDKTSQDADFTAKSIADKQGEAKKEDAKSQDKEQV.

It belongs to the TatA/E family. In terms of assembly, the Tat system comprises two distinct complexes: a TatABC complex, containing multiple copies of TatA, TatB and TatC subunits, and a separate TatA complex, containing only TatA subunits. Substrates initially bind to the TatABC complex, which probably triggers association of the separate TatA complex to form the active translocon.

It is found in the cell inner membrane. In terms of biological role, part of the twin-arginine translocation (Tat) system that transports large folded proteins containing a characteristic twin-arginine motif in their signal peptide across membranes. TatA could form the protein-conducting channel of the Tat system. The polypeptide is Sec-independent protein translocase protein TatA (Salmonella typhi).